The chain runs to 465 residues: Cysteine--tRNA ligase (465 aa).

Cys27 is a Zn(2+) binding site. Positions Pro29 to His39 match the 'HIGH' region motif. The Zn(2+) site is built by Cys207, His237, and Glu241. The short motif at Lys269–Ser273 is the 'KMSKS' region element. Lys272 lines the ATP pocket.

The protein belongs to the class-I aminoacyl-tRNA synthetase family. Monomer. The cofactor is Zn(2+).

Its subcellular location is the cytoplasm. It catalyses the reaction tRNA(Cys) + L-cysteine + ATP = L-cysteinyl-tRNA(Cys) + AMP + diphosphate. The polypeptide is Cysteine--tRNA ligase (Helicobacter pylori (strain HPAG1)).